We begin with the raw amino-acid sequence, 311 residues long: Dihydroorotate dehydrogenase B (NAD(+)), catalytic subunit (311 aa).

FMN-binding positions include Ser-24 and 48–49 (KA). Residues Lys-48 and 72–76 (NAIGL) contribute to the substrate site. Positions 104 and 132 each coordinate FMN. Position 132 (Asn-132) interacts with substrate. Cys-135 serves as the catalytic Nucleophile. 2 residues coordinate FMN: Lys-170 and Ile-196. A substrate-binding site is contributed by 197 to 198 (NT). FMN-binding positions include Gly-222, 248–249 (GG), and 270–271 (GT).

It belongs to the dihydroorotate dehydrogenase family. Type 1 subfamily. As to quaternary structure, heterotetramer of 2 PyrK and 2 PyrD type B subunits. FMN serves as cofactor.

Its subcellular location is the cytoplasm. The enzyme catalyses (S)-dihydroorotate + NAD(+) = orotate + NADH + H(+). The protein operates within pyrimidine metabolism; UMP biosynthesis via de novo pathway; orotate from (S)-dihydroorotate (NAD(+) route): step 1/1. Catalyzes the conversion of dihydroorotate to orotate with NAD(+) as electron acceptor. This Lactococcus lactis subsp. lactis (strain IL1403) (Streptococcus lactis) protein is Dihydroorotate dehydrogenase B (NAD(+)), catalytic subunit (pyrDB).